The sequence spans 347 residues: Molybdenum cofactor biosynthesis bifunctional protein (347 aa).

The tract at residues 1–158 (MFTHLDENQQ…EKTGGKADVS (158 aa)) is molybdenum cofactor biosynthesis protein C. Substrate contacts are provided by residues 75–77 (FCH) and 116–117 (ME). Aspartate 131 acts as the For MoaC activity in catalysis. The molybdenum cofactor guanylyltransferase stretch occupies residues 159–347 (QTPLYGLVLT…NSPEDYGQIN (189 aa)). Residues 167 to 169 (LTG), lysine 179, aspartate 226, and aspartate 255 each bind GTP. Residue aspartate 255 participates in Mg(2+) binding.

It in the N-terminal section; belongs to the MoaC family. This sequence in the C-terminal section; belongs to the MobA family. The cofactor is Mg(2+).

Its subcellular location is the cytoplasm. The catalysed reaction is Mo-molybdopterin + GTP + H(+) = Mo-molybdopterin guanine dinucleotide + diphosphate. It carries out the reaction (8S)-3',8-cyclo-7,8-dihydroguanosine 5'-triphosphate = cyclic pyranopterin phosphate + diphosphate. Its pathway is cofactor biosynthesis; molybdopterin biosynthesis. Functionally, catalyzes the conversion of (8S)-3',8-cyclo-7,8-dihydroguanosine 5'-triphosphate to cyclic pyranopterin monophosphate (cPMP). In terms of biological role, transfers a GMP moiety from GTP to Mo-molybdopterin (Mo-MPT) cofactor (Moco or molybdenum cofactor) to form Mo-molybdopterin guanine dinucleotide (Mo-MGD) cofactor. In Synechocystis sp. (strain ATCC 27184 / PCC 6803 / Kazusa), this protein is Molybdenum cofactor biosynthesis bifunctional protein (moaC/mobA).